The chain runs to 62 residues: Pro-MCH variant (62 aa).

Residues 23–41 (GSVAFPAENGVQDTESTQE) form an NGE-like region. A disordered region spans residues 28-62 (PAENGVQDTESTQEKRETGDEENSAQFPIGRRDFD). The interval 44 to 56 (ETGDEENSAQFPI) is NEI-like. The tract at residues 60-62 (DFD) is melanin-concentrating hormone-like.

It belongs to the melanin-concentrating hormone family.

This Hylobates lar (Lar gibbon) protein is Pro-MCH variant (PMCHL1).